The sequence spans 476 residues: Cysteine--tRNA ligase (476 aa).

Position 27 (C27) interacts with Zn(2+). The 'HIGH' region motif lies at 29-39 (ITPYDSVHVGH). Zn(2+) contacts are provided by C213, H238, and E242. The 'KMSKS' region motif lies at 271-275 (KMSKS). Residue K274 coordinates ATP.

The protein belongs to the class-I aminoacyl-tRNA synthetase family. Zn(2+) is required as a cofactor.

The protein localises to the cytoplasm. The enzyme catalyses tRNA(Cys) + L-cysteine + ATP = L-cysteinyl-tRNA(Cys) + AMP + diphosphate. The chain is Cysteine--tRNA ligase from Pyrobaculum arsenaticum (strain DSM 13514 / JCM 11321 / PZ6).